We begin with the raw amino-acid sequence, 595 residues long: MDLCFQNPVKCGDRLFSALNTSTYYKLGTSNLGFNGPVLENRKKKKKLPRMVTVKSVSSSVVASTVQGTKRDGGESLYDAIVIGSGIGGLVAATQLAVKEARVLVLEKYLIPGGSSGFYERDGYTFDVGSSVMFGFSDKGNLNLITQALKAVGRKMEVIPDPTTVHFHLPNNLSVRIHREYDDFIAELTSKFPHEKEGILGFYGDCWKIFNSLNSLELKSLEEPIYLFGQFFQKPLECLTLAYYLPQNAGAIARKYIKDPQLLSFIDAECFIVSTVNALQTPMINASMVLCDRHYGGINYPVGGVGGIAKSLAEGLVDQGSEIQYKANVKSIILDHGKAVGVRLADGREFFAKTIISNATRWDTFGKLLKGEKLPKEEENFQKVYVKAPSFLSIHMGVKAEVLPPDTDCHHFVLEDDWKNLEEPYGSIFLSIPTILDSSLAPDGRHILHIFTTSSIEDWEGLPPKEYEAKKEDVAARIIQRLEKKLFPGLSSSITFKEVGTPRTHRRFLARDKGTYGPMPRGTPKGLLGMPFNTTAIDGLYCVGDSCFPGQGVIAVAFSGVMCAHRVAADIGLEKKSRVLDVGLLGLLGWLRTLA.

A chloroplast-targeting transit peptide spans 1-56 (MDLCFQNPVKCGDRLFSALNTSTYYKLGTSNLGFNGPVLENRKKKKKLPRMVTVKS). V57 carries the N-acetylvaline modification.

The protein belongs to the carotenoid/retinoid oxidoreductase family. CrtISO subfamily. Requires NAD(+) as cofactor. It depends on NADP(+) as a cofactor. FAD is required as a cofactor.

The protein localises to the plastid. Its subcellular location is the chloroplast membrane. The catalysed reaction is 7,7',9,9'-tetra-cis-lycopene = all-trans-lycopene. It functions in the pathway carotenoid biosynthesis; lycopene biosynthesis. In terms of biological role, carotene cis-trans-isomerase that converts 7,9,9'-tri-cis-neurosporene to 9'-cis-neurosporene and 7,9,9',7'-tetra-cis-lycopene (also known as prolycopene) into all-trans-lycopene. Isomerization requires redox-active components, suggesting that isomerization is achieved by a reversible redox reaction acting at specific double bonds. Isomerizes adjacent cis-double bonds at C7 and C9 pairwise into the trans-configuration, but is incapable of isomerizing single cis-double bonds at C9 and C9'. Carotenoid biosynthesis is partly required to form the prolamellar bodies of etioplasts. This Arabidopsis thaliana (Mouse-ear cress) protein is Prolycopene isomerase, chloroplastic (CRTISO).